The primary structure comprises 114 residues: Phosphoribosyl-ATP pyrophosphatase (114 aa).

Belongs to the PRA-PH family.

Its subcellular location is the cytoplasm. The enzyme catalyses 1-(5-phospho-beta-D-ribosyl)-ATP + H2O = 1-(5-phospho-beta-D-ribosyl)-5'-AMP + diphosphate + H(+). The protein operates within amino-acid biosynthesis; L-histidine biosynthesis; L-histidine from 5-phospho-alpha-D-ribose 1-diphosphate: step 2/9. This is Phosphoribosyl-ATP pyrophosphatase from Leuconostoc mesenteroides subsp. mesenteroides (strain ATCC 8293 / DSM 20343 / BCRC 11652 / CCM 1803 / JCM 6124 / NCDO 523 / NBRC 100496 / NCIMB 8023 / NCTC 12954 / NRRL B-1118 / 37Y).